Here is a 109-residue protein sequence, read N- to C-terminus: uncharacterized protein (109 aa).

It to A.calcoaceticus putative ferredoxin.

This is an uncharacterized protein from Escherichia coli O157:H7.